The sequence spans 1153 residues: Bifunctional dioxygenase (DOX)-epoxy alcohol synthase (EAS) (1153 aa).

Residues 46–56 are compositionally biased toward low complexity; it reads SSKESPSRKSS. The tract at residues 46–113 is disordered; it reads SSKESPSRKS…TQHGDGTYPT (68 aa). The segment covering 57 to 74 has biased composition (polar residues); it reads TIGQSTRNGSCQADTQKG. The span at 81 to 98 shows a compositional bias: basic and acidic residues; sequence EKPKPVKENPMKKLKEMS. A fatty acid alpha-dioxygenase region spans residues 177-525; sequence TDSLINELWE…DGKFDDDDLV (349 aa). His276 contributes to the heme b binding site. The active site involves Tyr454. Heme b is bound at residue His457. The tract at residues 732-1153 is epoxy alcohol synthase; that stretch reads RVNITSYGGA…VTMRVMWDDE (422 aa). A heme-binding site is contributed by Cys1086.

The protein in the N-terminal section; belongs to the peroxidase family. It in the C-terminal section; belongs to the cytochrome P450 family. In terms of assembly, homotetramer. Heme b serves as cofactor. The cofactor is heme.

It catalyses the reaction (9Z)-octadecenoate + O2 = (8R)-hydroperoxy-(9Z)-octadecenoate. The enzyme catalyses (9Z)-octadecenoate + O2 = 10-hydroperoxy-(8E)-octadecenoate. It carries out the reaction (9Z,12Z)-octadecadienoate + O2 = (8E,10R,12Z)-10-hydroperoxyoctadeca-8,12-dienoate. The catalysed reaction is (9Z,12Z,15Z)-octadecatrienoate + O2 = (10R)-hydroperoxy-(8E,12Z,15Z)-octadecatrienoate. It catalyses the reaction (9Z,12Z,15Z)-octadecatrienoate + O2 = (8R)-hydroperoxy-(9Z,12Z,15Z)-octadecatrienoate. The enzyme catalyses (11Z,14Z)-eicosadienoate + O2 = 12-hydroperoxy-(10E,14Z)-eicosadienoate. It carries out the reaction (11Z,14Z,17Z)-eicosatrienoate + O2 = 12-hydroperoxy-(10E,14Z,17Z)-eicosatrienoate. The catalysed reaction is (12R,13S)-epoxy-(9Z)-octadecenoate + O2 = (12R,13S)-epoxy-(10R)-hydroperoxy-(8E)-octadecenoate. It catalyses the reaction (8E,10R,12Z)-10-hydroperoxyoctadeca-8,12-dienoate = (12S,13R)-epoxy-(10R)-hydroxy-(8E)-octadecenoate. The enzyme catalyses (10R)-hydroperoxy-(8E,12Z,15Z)-octadecatrienoate = 12,13-epoxy-(10R)-hydroxy-(8E,15Z)-octadecadienoate. It carries out the reaction 12-hydroperoxy-(10E,14Z)-eicosadienoate = 10,11-epoxy-12-hydroxy-(14Z)-eicosenoate. The catalysed reaction is 12-hydroperoxy-(10E,14Z,17Z)-eicosatrienoate = 14,15-epoxy-12-hydroxy-(10E,17Z)-eicosadienoate. It catalyses the reaction (13R)-hydroperoxy-(9Z,11E)-octadecadienoate = (12R,13R)-epoxy-(11S)-hydroxy-(9Z)-octadecenoate. The enzyme catalyses (13S)-hydroperoxy-(9Z,11E)-octadecadienoate = (12R,13R)-epoxy-(11S)-hydroxy-(9Z)-octadecenoate. It carries out the reaction 12-hydroperoxy-(10E,14Z)-eicosadienoate = 14,15-epoxy-12-hydroxy-(10E)-eicosenoate. The catalysed reaction is 12-hydroperoxy-(10E,14Z,17Z)-eicosatrienoate = 10,11-epoxy-12-hydroxy-(14Z,17Z)-eicosadienoate. Functionally, bifunctional dioxygenase (DOX)-epoxy alcohol synthase (EAS) that converts linoleic acid (18:2n-6) sequentially to 10(R)-hydroperoxy-8(E),12(Z)-octadecadienoic acid (10R-HPODE) and 10R-HPODE further to 12 S(13R)-epoxy-10(R)-hydroxy-8(E)-octadecenoic acid as the end product. Oxygenation at C-10 occurs by retention of the pro-R hydrogen of C-8 of 18:2n-6, suggesting antarafacial hydrogen abstraction and oxygenation. The epoxy alcohol is formed from 10R-HPODE, likely by heterolytic cleavage of the dioxygen bond and subsequent intramolecular epoxidation of the 12(Z) double bond. The DOX domain is also able to oxygenate position C-8 of linoleic acid to produce 8(R)-hydroperoxy-8(E),12(Z)-octadecadienoic acid (8R-HPODE). Moreover, the DOX domain can oxygenate alpha-linolenic acid (18:3n-3) at C-8 or C-10 to produce respectively 8HOTrE and 10HOTrE, oleic acid (18:1n-9) at C-8 or C-10 to produce respectively 8-H(P)OME and 10-H(P)OME (with 8R stereoisomer to over 95%), eicosadienoic acid (20:2n-6) at C-10 or C-12 to produce respectively 10(11)-epoxy-12-hydroxy-14(Z)-eicosenoic acid and 14(15)-epoxy-12-hydroxy-10(E)-eicosenoic acid, as well as eicosatrienoic acid (20:3n-3) at C-10 or C-12 to produce respectively 10(11)-epoxy-12-hydroxy-14(Z),17(Z)-eicosadienoic acid and 14(15)-epoxy-12-hydroxy-14(Z),17(Z)-eicosadienoic acid. On the other side, the enzyme EAS domain can also catalyze the conversion of 10HOTrE into 12(13)-epoxy-10(R)-hydroxy-8(E),15(Z)-octadecadienoic acid, 13-R-HPODE into the stereoisomers of 12(13)-epoxy-11-hydroxy-9(Z)-octadecenoic acids (erythro/threo, 1:4), as well as 13S-HPODE into the stereoisomers of 12(13)-epoxy-11-hydroxy-9(Z)-octadecenoic acids (erythro/threo, 1:4) (EAS activity). Gamma-linolenic acid (18:3n-6) is not a substrate. The sequence is that of Bifunctional dioxygenase (DOX)-epoxy alcohol synthase (EAS) from Pyricularia oryzae (strain 70-15 / ATCC MYA-4617 / FGSC 8958) (Rice blast fungus).